Reading from the N-terminus, the 338-residue chain is Lipoate-protein ligase A (338 aa).

The BPL/LPL catalytic domain occupies 29-216 (PATQRVLFLW…AFFAHYGERV (188 aa)). ATP contacts are provided by residues R71, 76 to 79 (GAVF), and K134. Residue K134 participates in (R)-lipoate binding.

It belongs to the LplA family. Monomer.

The protein localises to the cytoplasm. The enzyme catalyses L-lysyl-[lipoyl-carrier protein] + (R)-lipoate + ATP = N(6)-[(R)-lipoyl]-L-lysyl-[lipoyl-carrier protein] + AMP + diphosphate + H(+). The protein operates within protein modification; protein lipoylation via exogenous pathway; protein N(6)-(lipoyl)lysine from lipoate: step 1/2. Its pathway is protein modification; protein lipoylation via exogenous pathway; protein N(6)-(lipoyl)lysine from lipoate: step 2/2. In terms of biological role, catalyzes both the ATP-dependent activation of exogenously supplied lipoate to lipoyl-AMP and the transfer of the activated lipoyl onto the lipoyl domains of lipoate-dependent enzymes. The polypeptide is Lipoate-protein ligase A (Escherichia coli (strain 55989 / EAEC)).